The primary structure comprises 335 residues: uncharacterized protein (335 aa).

A run of 4 helical transmembrane segments spans residues Phe104–Leu124, Leu128–Phe148, Leu280–Gly300, and Thr310–Val330.

It localises to the cell membrane. This is an uncharacterized protein from Methanocaldococcus jannaschii (strain ATCC 43067 / DSM 2661 / JAL-1 / JCM 10045 / NBRC 100440) (Methanococcus jannaschii).